The chain runs to 335 residues: Nucleoid-associated protein YejK (335 aa).

This sequence belongs to the YejK family.

It localises to the cytoplasm. The protein resides in the nucleoid. This Shigella boydii serotype 18 (strain CDC 3083-94 / BS512) protein is Nucleoid-associated protein YejK.